The primary structure comprises 396 residues: Elongation factor Tu 1 (396 aa).

Positions 10 to 206 (KPHVNVGTIG…ALDSYIPLPE (197 aa)) constitute a tr-type G domain. A G1 region spans residues 19–26 (GHVDHGKT). GTP is bound at residue 19-26 (GHVDHGKT). Threonine 26 provides a ligand contact to Mg(2+). Positions 60–64 (GITIN) are G2. The segment at 81–84 (DCPG) is G3. GTP-binding positions include 81–85 (DCPGH) and 136–139 (NKCD). The G4 stretch occupies residues 136–139 (NKCD). The tract at residues 174–176 (SAK) is G5.

Belongs to the TRAFAC class translation factor GTPase superfamily. Classic translation factor GTPase family. EF-Tu/EF-1A subfamily. As to quaternary structure, monomer.

The protein resides in the cytoplasm. It catalyses the reaction GTP + H2O = GDP + phosphate + H(+). GTP hydrolase that promotes the GTP-dependent binding of aminoacyl-tRNA to the A-site of ribosomes during protein biosynthesis. This chain is Elongation factor Tu 1, found in Albidiferax ferrireducens (strain ATCC BAA-621 / DSM 15236 / T118) (Rhodoferax ferrireducens).